The chain runs to 87 residues: U3-theraphotoxin-Hhn1o (87 aa).

Residues 1 to 24 form the signal peptide; sequence MVNMKASMFLTFAGLVLLFVVCYA. Residues 25 to 52 constitute a propeptide that is removed on maturation; sequence SESEEKEFPKEMLSSIFAVDNDFKQEER. Disulfide bonds link Cys-54–Cys-67 and Cys-61–Cys-72.

The protein belongs to the neurotoxin 10 (Hwtx-1) family. 51 (Hntx-8) subfamily. Hntx-8 sub-subfamily. Expressed by the venom gland.

The protein resides in the secreted. Ion channel inhibitor. The sequence is that of U3-theraphotoxin-Hhn1o from Cyriopagopus hainanus (Chinese bird spider).